Consider the following 55-residue polypeptide: DNA-directed RNA polymerase subunit Rpo10 (55 aa).

Cys6, Cys9, Cys43, and Cys44 together coordinate Zn(2+).

It belongs to the archaeal Rpo10/eukaryotic RPB10 RNA polymerase subunit family. In terms of assembly, part of the RNA polymerase complex. The cofactor is Zn(2+).

It localises to the cytoplasm. The enzyme catalyses RNA(n) + a ribonucleoside 5'-triphosphate = RNA(n+1) + diphosphate. Functionally, DNA-dependent RNA polymerase (RNAP) catalyzes the transcription of DNA into RNA using the four ribonucleoside triphosphates as substrates. The chain is DNA-directed RNA polymerase subunit Rpo10 from Methanothermobacter thermautotrophicus (strain ATCC 29096 / DSM 1053 / JCM 10044 / NBRC 100330 / Delta H) (Methanobacterium thermoautotrophicum).